Consider the following 613-residue polypeptide: Portal protein (613 aa).

The interval 577–613 is disordered; the sequence is ATGGDHGIRQAPSARGDTEPDHAKSKPARDPPPGAGS. The segment covering 592-605 has biased composition (basic and acidic residues); it reads GDTEPDHAKSKPAR.

It belongs to the herpesviridae portal protein family. Homododecamerizes. Interacts with terminase subunits TRM1 and TRM3.

It is found in the virion. It localises to the host nucleus. The protein resides in the host cytoplasm. In terms of biological role, forms a portal in the viral capsid through which viral DNA is translocated during DNA packaging. Assembles as a dodecamer at a single fivefold axe of the T=16 icosahedric capsid. Binds to the molecular motor that translocates the viral DNA, termed terminase. The polypeptide is Portal protein (Epstein-Barr virus (strain B95-8) (HHV-4)).